The following is a 293-amino-acid chain: NAD-dependent protein deacetylase (293 aa).

In terms of domain architecture, Deacetylase sirtuin-type spans 1 to 284 (MTVAITQTGP…QPPDPLHTAT (284 aa)). NAD(+) contacts are provided by residues 27–47 (GAGCSTDSGIPDYRDLHGGWK) and 105–108 (QNVD). The active-site Proton acceptor is His-123. Residues Cys-131, Cys-134, Cys-182, and Cys-185 each coordinate Zn(2+). NAD(+) is bound by residues 222-224 (GSS), 248-250 (NFG), and Cys-266.

This sequence belongs to the sirtuin family. Class II subfamily. Zn(2+) serves as cofactor.

The protein resides in the cytoplasm. The enzyme catalyses N(6)-acetyl-L-lysyl-[protein] + NAD(+) + H2O = 2''-O-acetyl-ADP-D-ribose + nicotinamide + L-lysyl-[protein]. In terms of biological role, NAD-dependent protein deacetylase which modulates the activities of several enzymes which are inactive in their acetylated form. This Xanthomonas campestris pv. campestris (strain B100) protein is NAD-dependent protein deacetylase.